Consider the following 90-residue polypeptide: FMRFamide-like neuropeptides 27 (90 aa).

The signal sequence occupies residues 1-24 (MFSFRKFLAFMLIVIALMASFSSA). A propeptide spanning residues 25-36 (QPIDEERPIFME) is cleaved from the precursor. Phe61 is modified (phenylalanine amide). The propeptide occupies 65-90 (SSSPSDISMAELRAIYGGGPVEYVQL).

This sequence belongs to the FARP (FMRFamide related peptide) family.

The protein resides in the secreted. Its function is as follows. FMRFamides and FMRFamide-like peptides are neuropeptides. This is FMRFamide-like neuropeptides 27 from Caenorhabditis briggsae.